Consider the following 398-residue polypeptide: MSTAFLTLIAVIVCILFRILNVHSQPLKPSVWCLDAHFLDCLYKIAPVLREPYIPPRLWGFSGHVQTVLHSIVGRVRCPWPLGERVYMSLKDGSTLTYDLYQPLNEQEDDITVAICPGIANSSESVYIRTFVHLAQCNGYRCAVLNHIGALRSVQVTSTRIFTYGHTEDFAAMVEHLHQKYRQSRIVAVGFSLGGNLVTKYMGEDQKTKPDKVIGGISICQGYNAVEGTKWLLNWQNFRRFYLYIMTENVKSIILRHRHILLSDEVKARHNLNEREIIAAATLPELDEAYTRRVYNFPSTQELYKWSSSLFYFDTIKKPMIFINAKDDPLIPEDLLHPIKEYATTRQNTAYVEVAHGGHLGFYEGGFLYPNPVTWLDRTLVAMVGSLVMMHEVGKVAP.

Residues 1–4 (MSTA) are Cytoplasmic-facing. A helical; Signal-anchor for type II membrane protein transmembrane segment spans residues 5–22 (FLTLIAVIVCILFRILNV). Residues 23 to 398 (HSQPLKPSVW…MMHEVGKVAP (376 aa)) are Extracellular-facing. The region spanning 113–365 (VAICPGIANS…HGGHLGFYEG (253 aa)) is the AB hydrolase-1 domain. Catalysis depends on charge relay system residues S192, D328, and H359.

Belongs to the AB hydrolase superfamily. AB hydrolase 4 family.

The protein localises to the membrane. The protein is Abhydrolase domain-containing protein 2 (Hydr2) of Drosophila melanogaster (Fruit fly).